The sequence spans 730 residues: Heterogeneous nuclear ribonucleoprotein M (730 aa).

A compositionally biased stretch (low complexity) spans 1–13; sequence MAAGVEAAAEVAA. The disordered stretch occupies residues 1 to 62; the sequence is MAAGVEAAAE…NIKRGGNRFE (62 aa). A2 is modified (N-acetylalanine). Residue K17 forms a Glycyl lysine isopeptide (Lys-Gly) (interchain with G-Cter in SUMO2) linkage. Residue S29 is modified to Phosphoserine. Residue K37 forms a Glycyl lysine isopeptide (Lys-Gly) (interchain with G-Cter in SUMO2) linkage. Residues 38 to 50 show a composition bias toward basic and acidic residues; sequence GEGERPAQNEKRK. Residues K69 and K83 each participate in a glycyl lysine isopeptide (Lys-Gly) (interchain with G-Cter in SUMO2) cross-link. 2 RRM domains span residues 71–149 and 204–281; these read YRAF…EDPD and STVF…MDER. At S86 the chain carries Phosphoserine. Residues K88 and K127 each participate in a glycyl lysine isopeptide (Lys-Gly) (interchain with G-Cter in SUMO2) cross-link. K134 bears the N6-acetyllysine; alternate mark. Residue K134 forms a Glycyl lysine isopeptide (Lys-Gly) (interchain with G-Cter in SUMO2); alternate linkage. Residues K143 and K145 each participate in a glycyl lysine isopeptide (Lys-Gly) (interchain with G-Cter in SUMO2) cross-link. A Phosphoserine modification is found at S204. K221 participates in a covalent cross-link: Glycyl lysine isopeptide (Lys-Gly) (interchain with G-Cter in SUMO2). K277 carries the post-translational modification N6-acetyllysine; alternate. Residue K277 forms a Glycyl lysine isopeptide (Lys-Gly) (interchain with G-Cter in SUMO2); alternate linkage. Glycyl lysine isopeptide (Lys-Gly) (interchain with G-Cter in SUMO2) cross-links involve residues K285 and K345. 2 positions are modified to phosphoserine: S365 and S377. Residues K381 and K388 each participate in a glycyl lysine isopeptide (Lys-Gly) (interchain with G-Cter in SUMO2) cross-link. Residue S397 is modified to Phosphoserine. A run of 4 repeats spans residues 400–405, 407–412, 415–420, and 426–431. Residues 400-608 form a 27 X 6 AA repeats of [GEVSTPAN]-[ILMV]-[DE]-[RH]-[MLVI]-[GAV] region; it reads GIERMGPGID…ALGAGIERMG (209 aa). S432 is subject to Phosphoserine. A run of 3 repeats spans residues 433–438, 440–445, and 446–451. S452 bears the Phosphoserine mark. 4 consecutive repeat copies span residues 453-458, 461-466, 468-473, and 475-480. A Phosphoserine modification is found at S468. S481 is modified (phosphoserine). Tandem repeats lie at residues 482–487, 493–498, 500–505, 507–512, 514–519, 521–526, 528–533, 540–545, 547–552, 554–559, 562–566, 567–572, 575–579, 580–585, 588–593, and 603–608. R496 bears the Omega-N-methylarginine mark. S528 bears the Phosphoserine mark. A Phosphoserine modification is found at S575. S588 bears the Phosphoserine mark. 3 positions are modified to phosphoserine: S618, S633, and S637. K651 is covalently cross-linked (Glycyl lysine isopeptide (Lys-Gly) (interchain with G-Cter in SUMO2)). Residues 653 to 729 form the RRM 3 domain; it reads CQIFVRNLPF…REIDVRIDRN (77 aa). A Phosphothreonine modification is found at T665. A Glycyl lysine isopeptide (Lys-Gly) (interchain with G-Cter in SUMO2) cross-link involves residue K667. K672 carries the N6-acetyllysine modification. Glycyl lysine isopeptide (Lys-Gly) (interchain with G-Cter in SUMO2) cross-links involve residues K685 and K692. Residue K698 is modified to N6-acetyllysine; alternate. A Glycyl lysine isopeptide (Lys-Gly) (interchain with G-Cter in SUMO2); alternate cross-link involves residue K698. A Glycyl lysine isopeptide (Lys-Gly) (interchain with G-Cter in SUMO1); alternate cross-link involves residue K698. S701 is subject to Phosphoserine. Residue K716 forms a Glycyl lysine isopeptide (Lys-Gly) (interchain with G-Cter in SUMO2) linkage.

In terms of assembly, identified in the spliceosome C complex. Interacts with PPIA/CYPA. Sumoylated.

The protein resides in the nucleus. The protein localises to the nucleolus. In terms of biological role, pre-mRNA binding protein in vivo, binds avidly to poly(G) and poly(U) RNA homopolymers in vitro. Involved in splicing. Acts as a receptor for carcinoembryonic antigen in Kupffer cells, may initiate a series of signaling events leading to tyrosine phosphorylation of proteins and induction of IL-1 alpha, IL-6, IL-10 and tumor necrosis factor alpha cytokines. This is Heterogeneous nuclear ribonucleoprotein M (HNRNPM) from Homo sapiens (Human).